We begin with the raw amino-acid sequence, 290 residues long: Translin-associated protein X (290 aa).

A disordered region spans residues 1–31 (MNGKEGPGGFRKRKHDTFPHNQRREGKDASL). The segment covering 16–28 (DTFPHNQRREGKD) has biased composition (basic and acidic residues). The segment at 73 to 208 (LLHRITSAPD…MRMCINSVGN (136 aa)) is interaction with C1D. 2 residues coordinate Mg(2+): Glu-129 and Glu-197. Residue Lys-279 forms a Glycyl lysine isopeptide (Lys-Gly) (interchain with G-Cter in SUMO2) linkage.

This sequence belongs to the translin family. In terms of assembly, ring-shaped heterooctamer of six TSN and two TSNAX subunits. Interacts with GOLGA3, TSNAXIP1, SUN1 and AKAP9. Interacts with the homodimeric form of C1D following gamma-radiation. Interacts with TSN and C1D in a mutually exclusive manner. Post-translationally, sumoylated with SUMO1. In terms of tissue distribution, detected in heart, brain, lung, liver, kidney and testis.

It localises to the cytoplasm. It is found in the perinuclear region. The protein resides in the golgi apparatus. The protein localises to the nucleus. Acts in combination with TSN as an endonuclease involved in the activation of the RNA-induced silencing complex (RISC). Possible role in spermatogenesis. The chain is Translin-associated protein X (Tsnax) from Mus musculus (Mouse).